The chain runs to 354 residues: Uroporphyrinogen decarboxylase (354 aa).

Substrate contacts are provided by residues 30–34 (RQAGR), Asp-79, Tyr-154, Ser-209, and His-333.

It belongs to the uroporphyrinogen decarboxylase family. Homodimer.

The protein localises to the cytoplasm. The catalysed reaction is uroporphyrinogen III + 4 H(+) = coproporphyrinogen III + 4 CO2. It functions in the pathway porphyrin-containing compound metabolism; protoporphyrin-IX biosynthesis; coproporphyrinogen-III from 5-aminolevulinate: step 4/4. Its function is as follows. Catalyzes the decarboxylation of four acetate groups of uroporphyrinogen-III to yield coproporphyrinogen-III. The protein is Uroporphyrinogen decarboxylase of Mycolicibacterium gilvum (strain PYR-GCK) (Mycobacterium gilvum (strain PYR-GCK)).